The chain runs to 465 residues: Ribulose bisphosphate carboxylase large chain (465 aa).

N6,N6,N6-trimethyllysine is present on K4. T163 contributes to the substrate binding site. The Proton acceptor role is filled by K165. K167 contributes to the substrate binding site. K191, D193, and E194 together coordinate Mg(2+). At K191 the chain carries N6-carboxylysine. H284 (proton acceptor) is an active-site residue. Residues R285, H317, and S369 each contribute to the substrate site.

Belongs to the RuBisCO large chain family. Type I subfamily. In terms of assembly, heterohexadecamer of 8 large chains and 8 small chains; disulfide-linked. The disulfide link is formed within the large subunit homodimers. Mg(2+) is required as a cofactor. Post-translationally, the disulfide bond which can form in the large chain dimeric partners within the hexadecamer appears to be associated with oxidative stress and protein turnover.

It is found in the plastid. The protein resides in the chloroplast. It carries out the reaction 2 (2R)-3-phosphoglycerate + 2 H(+) = D-ribulose 1,5-bisphosphate + CO2 + H2O. The catalysed reaction is D-ribulose 1,5-bisphosphate + O2 = 2-phosphoglycolate + (2R)-3-phosphoglycerate + 2 H(+). Its function is as follows. RuBisCO catalyzes two reactions: the carboxylation of D-ribulose 1,5-bisphosphate, the primary event in carbon dioxide fixation, as well as the oxidative fragmentation of the pentose substrate in the photorespiration process. Both reactions occur simultaneously and in competition at the same active site. This chain is Ribulose bisphosphate carboxylase large chain, found in Trochodendron aralioides (Wheel tree).